The primary structure comprises 359 residues: Membrane-bound lytic murein transglycosylase C (359 aa).

The signal sequence occupies residues 1–16 (MKKYLALALIAPLLIS). Cysteine 17 carries N-palmitoyl cysteine lipidation. Cysteine 17 carries S-diacylglycerol cysteine lipidation.

It belongs to the transglycosylase Slt family.

The protein localises to the cell outer membrane. It carries out the reaction Exolytic cleavage of the (1-&gt;4)-beta-glycosidic linkage between N-acetylmuramic acid (MurNAc) and N-acetylglucosamine (GlcNAc) residues in peptidoglycan, from either the reducing or the non-reducing ends of the peptidoglycan chains, with concomitant formation of a 1,6-anhydrobond in the MurNAc residue.. Functionally, murein-degrading enzyme. May play a role in recycling of muropeptides during cell elongation and/or cell division. The chain is Membrane-bound lytic murein transglycosylase C from Escherichia fergusonii (strain ATCC 35469 / DSM 13698 / CCUG 18766 / IAM 14443 / JCM 21226 / LMG 7866 / NBRC 102419 / NCTC 12128 / CDC 0568-73).